Reading from the N-terminus, the 298-residue chain is Junctional adhesion molecule A (298 aa).

The first 28 residues, 1-28 (MGTEARAGRRQLLVFTSVVLSSLALGRG), serve as a signal peptide directing secretion. Ig-like V-type domains lie at 29–126 (AVYT…VQLT) and 134–227 (PTVH…EAVR). At 29 to 237 (AVYTSEPDVR…MEAAELNVGG (209 aa)) the chain is on the extracellular side. Intrachain disulfides connect cysteine 49–cysteine 108 and cysteine 152–cysteine 211. Asparagine 184 carries N-linked (GlcNAc...) asparagine glycosylation. The helical transmembrane segment at 238–258 (IVAAVLVTLILLGFLILGIWF) threads the bilayer. Residues 259 to 298 (AYRRGYFDRTKKGTSSKKVIYSQPAARSEGEFRQTSSFLV) lie on the Cytoplasmic side of the membrane. Phosphoserine is present on residues serine 280 and serine 286.

Belongs to the immunoglobulin superfamily. In terms of assembly, interacts with the ninth PDZ domain of MPDZ. Interacts with the first PDZ domain of PARD3. The association between PARD3 and PARD6B probably disrupts this interaction. Interacts with ITGAL (via I-domain). Interacts with CD151. (Microbial infection) Interacts with calicivirus capsid protein. As to quaternary structure, (Microbial infection) Interacts with the orthoreovirus sigma-1 capsid protein.

It is found in the cell junction. It localises to the tight junction. The protein localises to the cell membrane. Seems to play a role in epithelial tight junction formation. Appears early in primordial forms of cell junctions and recruits PARD3. The association of the PARD6-PARD3 complex may prevent the interaction of PARD3 with JAM1, thereby preventing tight junction assembly. Plays a role in regulating monocyte transmigration involved in integrity of epithelial barrier. Ligand for integrin alpha-L/beta-2 involved in memory T-cell and neutrophil transmigration. Involved in platelet activation. Its function is as follows. (Microbial infection) Acts as a functional receptor for murine norovirus. In terms of biological role, (Microbial infection) In case of orthoreovirus infection, serves as receptor for the virus. In Felis catus (Cat), this protein is Junctional adhesion molecule A (F11R).